The chain runs to 444 residues: Exodeoxyribonuclease 7 large subunit (444 aa).

It belongs to the XseA family. In terms of assembly, heterooligomer composed of large and small subunits.

It is found in the cytoplasm. It catalyses the reaction Exonucleolytic cleavage in either 5'- to 3'- or 3'- to 5'-direction to yield nucleoside 5'-phosphates.. Bidirectionally degrades single-stranded DNA into large acid-insoluble oligonucleotides, which are then degraded further into small acid-soluble oligonucleotides. This Rickettsia canadensis (strain McKiel) protein is Exodeoxyribonuclease 7 large subunit.